We begin with the raw amino-acid sequence, 1024 residues long: SAC3 family protein 1 (1024 aa).

Residues Met1 to Ser62 form a disordered region. Over residues Arg11 to Ser21 the composition is skewed to basic residues. A compositionally biased stretch (basic and acidic residues) spans Lys22 to Ser38. Positions Val39–Ala52 are enriched in acidic residues. In terms of domain architecture, PCI spans Glu243 to Lys433. Position 841 is a phosphoserine (Ser841). Residues Ala945–Thr1022 are a coiled coil.

It belongs to the SAC3 family.

Its subcellular location is the cytoplasm. It localises to the nucleus envelope. This is SAC3 family protein 1 from Schizosaccharomyces pombe (strain 972 / ATCC 24843) (Fission yeast).